The following is a 196-amino-acid chain: Peroxiredoxin TSA2 (196 aa).

A Thioredoxin domain is found at 3 to 161 (AEVQKQAPPF…ALRLVEGFQW (159 aa)). Lys-14 participates in a covalent cross-link: Glycyl lysine isopeptide (Lys-Gly) (interchain with G-Cter in ubiquitin). Cys-48 serves as the catalytic Cysteine sulfenic acid (-SOH) intermediate. Residues Lys-89 and Lys-132 each participate in a glycyl lysine isopeptide (Lys-Gly) (interchain with G-Cter in ubiquitin) cross-link. Thr-174 carries the post-translational modification Phosphothreonine.

It belongs to the peroxiredoxin family. AhpC/Prx1 subfamily. In terms of assembly, homodimer; disulfide-linked, upon oxidation.

Its subcellular location is the cytoplasm. The enzyme catalyses a hydroperoxide + [thioredoxin]-dithiol = an alcohol + [thioredoxin]-disulfide + H2O. Its function is as follows. Thiol-specific peroxidase that catalyzes the reduction of hydrogen peroxide and organic hydroperoxides to water and alcohols, respectively. Plays a role in cell protection against oxidative stress by detoxifying peroxides and as sensor of hydrogen peroxide-mediated signaling events. Can act alternatively as peroxidase and molecular chaperone. Oxidative stress and heat shock exposure cause a reversible shift of the protein structure from low MW species to high MW complexes, triggering a peroxidase-to-chaperone functional switch. The chaperone function of the protein enhances resistance to heat shock. This chain is Peroxiredoxin TSA2, found in Saccharomyces cerevisiae (strain ATCC 204508 / S288c) (Baker's yeast).